A 103-amino-acid polypeptide reads, in one-letter code: Carboxysome shell protein CcmK2 (103 aa).

Residues 4–90 form the BMC domain; that stretch reads AVGMIETRGF…PHENLEYVLP (87 aa).

It belongs to the bacterial microcompartments protein family. CcmK subfamily. Homohexamer, might also make dodecamers. Interacts with full-length CcmM. Forms mixed heterohexamers of all possible stoichiometries with CcmK1, which might form dodecamers. Only very weak interactions with CcmK3 and CcmK4 were seen.

It localises to the carboxysome. Functionally, one of the shell proteins of the carboxysome, a polyhedral inclusion where RuBisCO (ribulose bisphosphate carboxylase, rbcL-rbcS) is sequestered. The central pore probably regulates metabolite flux. Hexamers make sheets that form the facets of the polyhedral carboxysome. This Synechocystis sp. (strain ATCC 27184 / PCC 6803 / Kazusa) protein is Carboxysome shell protein CcmK2.